The following is a 595-amino-acid chain: Neuroepithelial cell-transforming gene 1 protein (595 aa).

The residue at position 1 (Met1) is an N-acetylmethionine. Positions 1 to 42 (MEPEPAAQKQPRPRRRSRRVSMLSEEPAAGLPADTPGPAANE) are disordered. A necessary for nuclear localization region spans residues 1-74 (MEPEPAAQKQ…LKRKRREKDD (74 aa)). The short motif at 12 to 19 (RPRRRSRR) is the Nuclear localization signal element. Ser21 bears the Phosphoserine mark. A Nuclear localization signal motif is present at residues 66–72 (KRKRREK). A phosphoserine mark is found at Ser100, Ser106, and Ser122. The tract at residues 127-151 (GDHRSPASAQKSFSRSTVPTPTKRR) is disordered. Positions 133-146 (ASAQKSFSRSTVPT) are enriched in polar residues. The 183-residue stretch at 174-356 (KRQEAIYELS…QGVLSDINLK (183 aa)) folds into the DH domain. The region spanning 386-501 (VLLCHGELKN…WFNCIRAAIA (116 aa)) is the PH domain. Ser508 carries the post-translational modification Phosphoserine. Residues 555 to 595 (CGSSVQTVEDTRNMKAQRPQPGLRRARDKAQSGGKKKETLV) are disordered.

In terms of assembly, interacts with RHOA in its GTP- and GDP-bound states, and with CDC42 in its GTP-bound state. Interacts with the PDZ 1 domain of BAIAP1.

It is found in the cytoplasm. It localises to the nucleus. Its function is as follows. Acts as a guanine nucleotide exchange factor (GEF) for RhoA GTPase. May be involved in activation of the SAPK/JNK pathway. Stimulates genotoxic stress-induced RHOB activity in breast cancer cells leading to their cell death. The sequence is that of Neuroepithelial cell-transforming gene 1 protein (Net1) from Mus musculus (Mouse).